Reading from the N-terminus, the 614-residue chain is Probable zinc transporter protein DDB_G0269332 (614 aa).

Disordered stretches follow at residues M1 to L103 and S115 to F178. The Cytoplasmic segment spans residues M1–K203. Residues Q17 to D64 are compositionally biased toward low complexity. Residues G80 to S92 show a composition bias toward basic residues. Residues N121 to N176 show a composition bias toward low complexity. The chain crosses the membrane as a helical span at residues L204–Y224. Residues L225–D233 are Extracellular-facing. Residues G234–G254 form a helical membrane-spanning segment. Over K255–W270 the chain is Cytoplasmic. The chain crosses the membrane as a helical span at residues E271–L291. The Extracellular portion of the chain corresponds to E292–H306. Residues G307–F327 form a helical membrane-spanning segment. The Cytoplasmic portion of the chain corresponds to K328–H351. Residues I352–F372 form a helical membrane-spanning segment. Over G373 to S377 the chain is Extracellular. A helical membrane pass occupies residues D378 to I398. At K399–H614 the chain is on the cytoplasmic side. Positions E483–H614 are disordered. Composition is skewed to basic residues over residues N487–H499 and S507–S523. Basic and acidic residues predominate over residues G525–N535. Residues V548–P567 are compositionally biased toward polar residues. Positions Q575 to D585 are enriched in acidic residues. Positions H586 to H599 are enriched in basic and acidic residues. Over residues H600–H614 the composition is skewed to basic residues.

This sequence belongs to the cation diffusion facilitator (CDF) transporter (TC 2.A.4) family. SLC30A subfamily.

It localises to the membrane. May be involved in zinc transport from the cytoplasm to either intracellular organelles or extracellular spaces. This chain is Probable zinc transporter protein DDB_G0269332, found in Dictyostelium discoideum (Social amoeba).